Reading from the N-terminus, the 63-residue chain is ARDGYPVDEKGCKLSCLINDKWCNSACHSRGGKYGYCYTGGLACYCEAVPDNVKVWTYETNTC.

The 62-residue stretch at 2–63 (RDGYPVDEKG…KVWTYETNTC (62 aa)) folds into the LCN-type CS-alpha/beta domain. Cystine bridges form between Cys-12–Cys-63, Cys-16–Cys-37, Cys-23–Cys-44, and Cys-27–Cys-46.

It belongs to the long (4 C-C) scorpion toxin superfamily. Sodium channel inhibitor family. As to expression, expressed by the venom gland.

The protein resides in the secreted. Its function is as follows. First blocker of sodium channels (Nav) found in scorpions. Is lethal to crustaceans (Cambarellus montezumae), less toxic to insects (crickets) and non-toxic to mammals (mice) at the doses assayed. The chain is Toxin Cn11 from Centruroides noxius (Mexican scorpion).